The sequence spans 565 residues: Carboxylesterase 1D (565 aa).

Positions 1 to 18 (MRLYPLVWLFLAACTAWG) are cleaved as a signal peptide. A glycan (N-linked (GlcNAc...) asparagine) is linked at asparagine 79. Cysteine 87 and cysteine 116 form a disulfide bridge. The Acyl-ester intermediate role is filled by serine 221. Cysteine 273 and cysteine 284 form a disulfide bridge. The active-site Charge relay system is glutamate 353. An N6-succinyllysine modification is found at lysine 382. The active-site Charge relay system is the histidine 466. The N-linked (GlcNAc...) asparagine glycan is linked to asparagine 489. A Prevents secretion from ER motif is present at residues 562–565 (HVEL).

The protein belongs to the type-B carboxylesterase/lipase family. In terms of assembly, homotrimer. As to expression, detected in liver, lung and testis, but not in kidney (at protein level).

It localises to the endoplasmic reticulum lumen. Its subcellular location is the cytoplasm. The protein localises to the cytosol. It is found in the lipid droplet. The protein resides in the microsome. The catalysed reaction is all-trans-retinyl hexadecanoate + H2O = all-trans-retinol + hexadecanoate + H(+). It carries out the reaction a carboxylic ester + H2O = an alcohol + a carboxylate + H(+). It catalyses the reaction a long-chain fatty acyl ethyl ester + H2O = a long-chain fatty acid + ethanol + H(+). FAEE-synthesizing and PNPB-hydrolyzing activities are both inhibited by DFP. Its function is as follows. Major lipase in white adipose tissue. Involved in the metabolism of xenobiotics and of natural substrates. Hydrolyzes triacylglycerols and monoacylglycerols, with a preference for monoacylglycerols. The susceptibility of the substrate increases with decreasing acyl chain length of the fatty acid moiety. Catalyzes the synthesis of fatty acid ethyl esters. Hydrolyzes retinyl esters. This Rattus norvegicus (Rat) protein is Carboxylesterase 1D.